The sequence spans 64 residues: MAVPKRKTTPSKRDMRRANHDKVTPVQLVSCENCGEARLPHRACGACGHYNGRKAKATKATAAS.

Over residues 1–10 (MAVPKRKTTP) the composition is skewed to basic residues. The disordered stretch occupies residues 1 to 22 (MAVPKRKTTPSKRDMRRANHDK). Basic and acidic residues predominate over residues 11-22 (SKRDMRRANHDK).

This sequence belongs to the bacterial ribosomal protein bL32 family.

The polypeptide is Large ribosomal subunit protein bL32 (Sorangium cellulosum (strain So ce56) (Polyangium cellulosum (strain So ce56))).